The following is a 375-amino-acid chain: D-aspartate oxidase (375 aa).

The signal sequence occupies residues 1–17 (MATVCVVGSGILGLAVA). FAD contacts are provided by Ser9, Leu12, Asp34, Ser51, and Gly55. N-linked (GlcNAc...) asparagine glycosylation occurs at Asn203. Arg322, Gly354, and Tyr355 together coordinate FAD.

It belongs to the DAMOX/DASOX family. It depends on FAD as a cofactor.

The enzyme catalyses D-aspartate + O2 + H2O = oxaloacetate + H2O2 + NH4(+). It carries out the reaction D-glutamate + O2 + H2O = H2O2 + 2-oxoglutarate + NH4(+). In terms of biological role, selectively catalyzes the oxidative deamination of acidic amino acids. Protects the organism from the toxicity of D-amino acids. Enables the organism to utilize D-amino acids as a source of nutrients. Enables the organism to utilize D-aspartate as a nitrogen source. This chain is D-aspartate oxidase (DDO), found in Komagataella phaffii (strain GS115 / ATCC 20864) (Yeast).